Consider the following 249-residue polypeptide: Triosephosphate isomerase (249 aa).

Residue 9–11 coordinates substrate; the sequence is NWK. Catalysis depends on histidine 95, which acts as the Electrophile. Glutamate 166 (proton acceptor) is an active-site residue. Substrate is bound by residues glycine 172, serine 211, and 232–233; that span reads GG.

It belongs to the triosephosphate isomerase family. In terms of assembly, homodimer.

It localises to the cytoplasm. The enzyme catalyses D-glyceraldehyde 3-phosphate = dihydroxyacetone phosphate. The protein operates within carbohydrate biosynthesis; gluconeogenesis. It participates in carbohydrate degradation; glycolysis; D-glyceraldehyde 3-phosphate from glycerone phosphate: step 1/1. Its function is as follows. Involved in the gluconeogenesis. Catalyzes stereospecifically the conversion of dihydroxyacetone phosphate (DHAP) to D-glyceraldehyde-3-phosphate (G3P). This is Triosephosphate isomerase from Legionella pneumophila subsp. pneumophila (strain Philadelphia 1 / ATCC 33152 / DSM 7513).